A 461-amino-acid polypeptide reads, in one-letter code: Argininosuccinate lyase (461 aa).

The 2-(N(omega)-L-arginino)succinate site is built by Ser-28, Asn-115, and Thr-160. His-161 serves as the catalytic Proton acceptor. The active-site Proton donor is Ser-282. 2-(N(omega)-L-arginino)succinate-binding residues include Asn-290, Tyr-322, Gln-327, and Lys-330.

The protein belongs to the lyase 1 family. Argininosuccinate lyase subfamily. Homotetramer.

It catalyses the reaction 2-(N(omega)-L-arginino)succinate = fumarate + L-arginine. Its pathway is amino-acid biosynthesis; L-arginine biosynthesis; L-arginine from L-ornithine and carbamoyl phosphate: step 3/3. The protein is Argininosuccinate lyase (arg7) of Schizosaccharomyces pombe (strain 972 / ATCC 24843) (Fission yeast).